Reading from the N-terminus, the 449-residue chain is Trigger factor (449 aa).

The 72-residue stretch at threonine 160–glutamine 231 folds into the PPIase FKBP-type domain. The tract at residues glycine 411–glutamate 449 is disordered. Residues alanine 415 to alanine 443 are compositionally biased toward low complexity.

Belongs to the FKBP-type PPIase family. Tig subfamily.

The protein resides in the cytoplasm. It carries out the reaction [protein]-peptidylproline (omega=180) = [protein]-peptidylproline (omega=0). In terms of biological role, involved in protein export. Acts as a chaperone by maintaining the newly synthesized protein in an open conformation. Functions as a peptidyl-prolyl cis-trans isomerase. The sequence is that of Trigger factor from Deinococcus geothermalis (strain DSM 11300 / CIP 105573 / AG-3a).